The following is a 721-amino-acid chain: Quinolinate synthase, chloroplastic (721 aa).

The N-terminal 67 residues, 1–67 (MDAANLVMKS…KIPSNNSTFT (67 aa)), are a transit peptide targeting the chloroplast. Residue C133 is the Cysteine persulfide intermediate of the active site. Residues H283 and S309 each contribute to the iminosuccinate site. Position 363 (C363) interacts with [4Fe-4S] cluster. Iminosuccinate contacts are provided by residues 392 to 394 (YIN) and S414. C487 is a [4Fe-4S] cluster binding site. Iminosuccinate is bound by residues 513-515 (HFE) and T538. C643 serves as a coordination point for [4Fe-4S] cluster.

Belongs to the quinolinate synthase family. Type 1 subfamily. In terms of assembly, homodimer. [4Fe-4S] cluster serves as cofactor.

Its subcellular location is the plastid. The protein localises to the chloroplast. The enzyme catalyses iminosuccinate + dihydroxyacetone phosphate = quinolinate + phosphate + 2 H2O + H(+). The protein operates within alkaloid biosynthesis; nicotine biosynthesis. It functions in the pathway cofactor biosynthesis; NAD(+) biosynthesis; quinolinate from iminoaspartate: step 1/1. In terms of biological role, involved in the biosynthesis of pyridine alkaloid natural products, leading mainly to the production of anabasine, anatabine, nicotine and nornicotine, effective deterrents against herbivores with antiparasitic and pesticide properties (neurotoxins); nornicotine serves as the precursor in the synthesis of the carcinogen compound N'-nitrosonornicotine (NNN). Catalyzes the condensation of iminoaspartate with dihydroxyacetone phosphate to form quinolinate. The polypeptide is Quinolinate synthase, chloroplastic (Nicotiana tabacum (Common tobacco)).